We begin with the raw amino-acid sequence, 621 residues long: uncharacterized protein (621 aa).

4 stretches are compositionally biased toward low complexity: residues 1-10 (MIEDNINNNE), 63-79 (TEPL…TTPS), 137-182 (NNNN…NNFN), and 309-347 (NQSI…NNNN). Disordered regions lie at residues 1–29 (MIED…DKNN), 63–100 (TEPL…SNKT), 135–194 (DDNN…KDND), 307–374 (KTNQ…EDDT), 430–471 (YNNN…IAKR), 492–539 (KQSQ…IKII), and 594–614 (PTQI…SPSK). Residues 348–357 (STLTSSNSLS) are compositionally biased toward polar residues. 3 stretches are compositionally biased toward low complexity: residues 431 to 459 (NNNN…NNNN), 496 to 539 (NNNN…IKII), and 597 to 613 (INSN…SSPS).

This is an uncharacterized protein from Dictyostelium discoideum (Social amoeba).